A 273-amino-acid polypeptide reads, in one-letter code: Phosphate import ATP-binding protein PstB 1 (273 aa).

In terms of domain architecture, ABC transporter spans 27-268 (ISIEHLSLYY…PLKKQTEDYI (242 aa)). Position 59 to 66 (59 to 66 (GPSGCGKS)) interacts with ATP.

This sequence belongs to the ABC transporter superfamily. Phosphate importer (TC 3.A.1.7) family. The complex is composed of two ATP-binding proteins (PstB), two transmembrane proteins (PstC and PstA) and a solute-binding protein (PstS).

It localises to the cell inner membrane. It carries out the reaction phosphate(out) + ATP + H2O = ADP + 2 phosphate(in) + H(+). Part of the ABC transporter complex PstSACB involved in phosphate import. Responsible for energy coupling to the transport system. This chain is Phosphate import ATP-binding protein PstB 1, found in Vibrio cholerae serotype O1 (strain ATCC 39315 / El Tor Inaba N16961).